A 342-amino-acid polypeptide reads, in one-letter code: Phosphate acyltransferase (342 aa).

The protein belongs to the PlsX family. As to quaternary structure, homodimer. Probably interacts with PlsY.

It localises to the cytoplasm. It carries out the reaction a fatty acyl-[ACP] + phosphate = an acyl phosphate + holo-[ACP]. It participates in lipid metabolism; phospholipid metabolism. Functionally, catalyzes the reversible formation of acyl-phosphate (acyl-PO(4)) from acyl-[acyl-carrier-protein] (acyl-ACP). This enzyme utilizes acyl-ACP as fatty acyl donor, but not acyl-CoA. This Leuconostoc mesenteroides subsp. mesenteroides (strain ATCC 8293 / DSM 20343 / BCRC 11652 / CCM 1803 / JCM 6124 / NCDO 523 / NBRC 100496 / NCIMB 8023 / NCTC 12954 / NRRL B-1118 / 37Y) protein is Phosphate acyltransferase.